A 597-amino-acid chain; its full sequence is Elongation factor 4 (597 aa).

Positions aspartate 2–lysine 184 constitute a tr-type G domain. Residues aspartate 14–threonine 19 and asparagine 131–aspartate 134 contribute to the GTP site.

The protein belongs to the TRAFAC class translation factor GTPase superfamily. Classic translation factor GTPase family. LepA subfamily.

The protein resides in the cell inner membrane. It carries out the reaction GTP + H2O = GDP + phosphate + H(+). Its function is as follows. Required for accurate and efficient protein synthesis under certain stress conditions. May act as a fidelity factor of the translation reaction, by catalyzing a one-codon backward translocation of tRNAs on improperly translocated ribosomes. Back-translocation proceeds from a post-translocation (POST) complex to a pre-translocation (PRE) complex, thus giving elongation factor G a second chance to translocate the tRNAs correctly. Binds to ribosomes in a GTP-dependent manner. This Burkholderia ambifaria (strain MC40-6) protein is Elongation factor 4.